The primary structure comprises 322 residues: MAPALTQSLNGATPQVKAALHHLDANTVSIDDIIHYLKHHGGVVVQNLISEEILQEVGADIKPYFDALVEPGFFSSKTRIVTRLPNKSIAFVEKIFGNQVFQDICDHFLTSHHRGWYGNEQYTYSPHPVFNSALAFSTLPGNETQSLHRECMGQHNKLPAIAPEDYPIGRDTVLGMFVADTRTTRENGATRFIPGSHLQSTLDPPDESQTVPVEMNRGDVFLMLGSCYHGASANVSQAEERILYSTFMTQSTRRQLTTCLFLVQEENIYLSVPVDRVRVFSPRMQKRLGFSASDPLFGWVDVKDPRKVFNLPGLSEGQHIDV.

Fe cation-binding residues include His148 and His229.

Belongs to the PhyH family. Homodimer. Requires Fe cation as cofactor.

The protein operates within secondary metabolite biosynthesis. In terms of biological role, polyketide synthase-nonribosomal peptide synthetase; part of the him gene cluster that mediates the biosynthesis of himeic acid A, a ubiquitin-activating enzyme (E1) inhibitor. First, himA, together with the trans-enoyl reductase himH, catalyzes the formation of apolyketide chain, which is then condensed with leucine by the NRPS activity of himA. Dieckmann cyclization and release from himA gives a tetramic acid intermediate as the product of himA PKS-NRPS. HimG then catalyzes alpha-oxidation of the tetramic acid ring, with a subsequent rearrangement to yield apyrone intermediate. Two terminal methyl groups of polyketide and amide side chains are oxidized to carboxylic acids by himC cytochrome P450 monooxygenase to form himeic acid A. Himeic acid A is further converted to himeic acid B and C during culture growth. No gene responsible for pyrone to pyridone conversion was found in the him gene cluster and himeic acid A is non-enzymatically converted to himeic acid C by the incorporation of an ammonium nitrogen atom in a pH5 buffer, and to himeic acid B at a conversion ratio of 50% during incubation in MeOH for 5 days. This is Dioxygenase himG from Aspergillus japonicus.